A 107-amino-acid polypeptide reads, in one-letter code: Integration host factor subunit beta (107 aa).

Positions 78–107 are disordered; sequence PHFKPGKELRERVDGRAGEPLKADEPDDER. Residues 82-101 are compositionally biased toward basic and acidic residues; the sequence is PGKELRERVDGRAGEPLKAD.

The protein belongs to the bacterial histone-like protein family. In terms of assembly, heterodimer of an alpha and a beta chain.

Functionally, this protein is one of the two subunits of integration host factor, a specific DNA-binding protein that functions in genetic recombination as well as in transcriptional and translational control. This Burkholderia multivorans (strain ATCC 17616 / 249) protein is Integration host factor subunit beta.